We begin with the raw amino-acid sequence, 392 residues long: uncharacterized protein (392 aa).

Residues 1-23 form the signal peptide; that stretch reads MWTALVLVWISSVLLPRSHMMSA. Residues 24–342 lie on the Extracellular side of the membrane; the sequence is EPRNIVTNKW…DALTPSLVNK (319 aa). Residue Asn-77 is glycosylated (N-linked (GlcNAc...) asparagine). 2 disordered regions span residues 83–154 and 167–320; these read AEVT…PRTA and AAGT…TDSC. A compositionally biased stretch (low complexity) spans 86–97; the sequence is TTHGTNTSTPTT. Composition is skewed to polar residues over residues 107–127 and 170–249; these read SRTL…TRPT and TVNT…SAST. An N-linked (GlcNAc...) asparagine glycan is attached at Asn-172. 2 stretches are compositionally biased toward low complexity: residues 265–277 and 284–309; these read SPTT…LPTQ and TLLT…SRSS. Residues 343–363 form a helical membrane-spanning segment; it reads MLLLVVLLVGVTLFIAVLVMF. At 364–392 the chain is on the cytoplasmic side; sequence ALQAYESYKKKDYTQVDYLINGMYADSEM.

Its subcellular location is the cell membrane. It is found in the golgi apparatus. The protein resides in the trans-Golgi network membrane. This is an uncharacterized protein from Mus musculus (Mouse).